The primary structure comprises 214 residues: Charged multivesicular body protein 2b (214 aa).

Residues 25–55 (QRTITRDRAALEKQERQLELEIKKMAKTGNK) are a coiled coil. The interval 179-201 (AKAPSAARGLPSASTSKASTISD) is disordered. A compositionally biased stretch (polar residues) spans 190-199 (SASTSKASTI). The short motif at 202–212 (EEIERQLKALG) is the MIT-interacting motif element.

Belongs to the SNF7 family. Probable core component of the endosomal sorting required for transport complex III (ESCRT-III). ESCRT-III components are thought to multimerize to form a flat lattice on the perimeter membrane of the endosome.

It localises to the cytoplasm. The protein localises to the cytosol. Its subcellular location is the late endosome membrane. Probable core component of the endosomal sorting required for transport complex III (ESCRT-III) which is involved in multivesicular bodies (MVBs) formation and sorting of endosomal cargo proteins into MVBs. MVBs contain intraluminal vesicles (ILVs) that are generated by invagination and scission from the limiting membrane of the endosome and mostly are delivered to lysosomes enabling degradation of membrane proteins, such as stimulated growth factor receptors, lysosomal enzymes and lipids. The protein is Charged multivesicular body protein 2b (CHMP2B) of Gallus gallus (Chicken).